The primary structure comprises 347 residues: 3-isopropylmalate dehydrogenase (347 aa).

76-87 lines the NAD(+) pocket; the sequence is GPKWTDPNNRPE. Residues Arg-94, Arg-104, Arg-132, and Asp-217 each contribute to the substrate site. Asp-217, Asp-241, and Asp-245 together coordinate Mg(2+). 275–287 lines the NAD(+) pocket; sequence GSAPDIANEDKAN.

The protein belongs to the isocitrate and isopropylmalate dehydrogenases family. LeuB type 1 subfamily. As to quaternary structure, homodimer. The cofactor is Mg(2+). Requires Mn(2+) as cofactor.

It localises to the cytoplasm. The enzyme catalyses (2R,3S)-3-isopropylmalate + NAD(+) = 4-methyl-2-oxopentanoate + CO2 + NADH. It functions in the pathway amino-acid biosynthesis; L-leucine biosynthesis; L-leucine from 3-methyl-2-oxobutanoate: step 3/4. Catalyzes the oxidation of 3-carboxy-2-hydroxy-4-methylpentanoate (3-isopropylmalate) to 3-carboxy-4-methyl-2-oxopentanoate. The product decarboxylates to 4-methyl-2 oxopentanoate. This Staphylococcus epidermidis (strain ATCC 12228 / FDA PCI 1200) protein is 3-isopropylmalate dehydrogenase.